The chain runs to 237 residues: 1-(5-phosphoribosyl)-5-[(5-phosphoribosylamino)methylideneamino] imidazole-4-carboxamide isomerase (237 aa).

The active-site Proton acceptor is the D8. D129 functions as the Proton donor in the catalytic mechanism.

It belongs to the HisA/HisF family.

The protein resides in the cytoplasm. It carries out the reaction 1-(5-phospho-beta-D-ribosyl)-5-[(5-phospho-beta-D-ribosylamino)methylideneamino]imidazole-4-carboxamide = 5-[(5-phospho-1-deoxy-D-ribulos-1-ylimino)methylamino]-1-(5-phospho-beta-D-ribosyl)imidazole-4-carboxamide. It participates in amino-acid biosynthesis; L-histidine biosynthesis; L-histidine from 5-phospho-alpha-D-ribose 1-diphosphate: step 4/9. In Acetivibrio thermocellus (strain ATCC 27405 / DSM 1237 / JCM 9322 / NBRC 103400 / NCIMB 10682 / NRRL B-4536 / VPI 7372) (Clostridium thermocellum), this protein is 1-(5-phosphoribosyl)-5-[(5-phosphoribosylamino)methylideneamino] imidazole-4-carboxamide isomerase.